We begin with the raw amino-acid sequence, 182 residues long: Large ribosomal subunit protein uL5 (182 aa).

The protein belongs to the universal ribosomal protein uL5 family. As to quaternary structure, part of the 50S ribosomal subunit; part of the 5S rRNA/L5/L18/L25 subcomplex. Contacts the 5S rRNA and the P site tRNA. Forms a bridge to the 30S subunit in the 70S ribosome.

Its function is as follows. This is one of the proteins that bind and probably mediate the attachment of the 5S RNA into the large ribosomal subunit, where it forms part of the central protuberance. In the 70S ribosome it contacts protein S13 of the 30S subunit (bridge B1b), connecting the 2 subunits; this bridge is implicated in subunit movement. Contacts the P site tRNA; the 5S rRNA and some of its associated proteins might help stabilize positioning of ribosome-bound tRNAs. In Thermus aquaticus, this protein is Large ribosomal subunit protein uL5.